A 477-amino-acid chain; its full sequence is Protein AC142 (477 aa).

The protein localises to the host cytoplasm. Its subcellular location is the host nucleus. It localises to the virion. Functionally, required for occlusion-derived virus (ODV) envelopment and subsequent embedding of virions into polyhedra. In Autographa californica nuclear polyhedrosis virus (AcMNPV), this protein is Protein AC142 (ORF142).